The chain runs to 286 residues: 2,3,4,5-tetrahydropyridine-2,6-dicarboxylate N-succinyltransferase (286 aa).

Substrate contacts are provided by Arg-111 and Asp-148.

Belongs to the transferase hexapeptide repeat family. In terms of assembly, homotrimer.

The protein resides in the cytoplasm. The enzyme catalyses (S)-2,3,4,5-tetrahydrodipicolinate + succinyl-CoA + H2O = (S)-2-succinylamino-6-oxoheptanedioate + CoA. It participates in amino-acid biosynthesis; L-lysine biosynthesis via DAP pathway; LL-2,6-diaminopimelate from (S)-tetrahydrodipicolinate (succinylase route): step 1/3. This Rhizobium etli (strain ATCC 51251 / DSM 11541 / JCM 21823 / NBRC 15573 / CFN 42) protein is 2,3,4,5-tetrahydropyridine-2,6-dicarboxylate N-succinyltransferase.